The primary structure comprises 60 residues: Large ribosomal subunit protein uL30 (60 aa).

It belongs to the universal ribosomal protein uL30 family. In terms of assembly, part of the 50S ribosomal subunit.

The chain is Large ribosomal subunit protein uL30 from Moorella thermoacetica (strain ATCC 39073 / JCM 9320).